We begin with the raw amino-acid sequence, 185 residues long: ATP synthase subunit delta (185 aa).

It belongs to the ATPase delta chain family. As to quaternary structure, F-type ATPases have 2 components, F(1) - the catalytic core - and F(0) - the membrane proton channel. F(1) has five subunits: alpha(3), beta(3), gamma(1), delta(1), epsilon(1). F(0) has three main subunits: a(1), b(2) and c(10-14). The alpha and beta chains form an alternating ring which encloses part of the gamma chain. F(1) is attached to F(0) by a central stalk formed by the gamma and epsilon chains, while a peripheral stalk is formed by the delta and b chains.

Its subcellular location is the cell inner membrane. F(1)F(0) ATP synthase produces ATP from ADP in the presence of a proton or sodium gradient. F-type ATPases consist of two structural domains, F(1) containing the extramembraneous catalytic core and F(0) containing the membrane proton channel, linked together by a central stalk and a peripheral stalk. During catalysis, ATP synthesis in the catalytic domain of F(1) is coupled via a rotary mechanism of the central stalk subunits to proton translocation. Its function is as follows. This protein is part of the stalk that links CF(0) to CF(1). It either transmits conformational changes from CF(0) to CF(1) or is implicated in proton conduction. The protein is ATP synthase subunit delta of Coxiella burnetii (strain CbuG_Q212) (Coxiella burnetii (strain Q212)).